The sequence spans 156 residues: Small ribosomal subunit protein uS7 (156 aa).

This sequence belongs to the universal ribosomal protein uS7 family. In terms of assembly, part of the 30S ribosomal subunit. Contacts proteins S9 and S11.

In terms of biological role, one of the primary rRNA binding proteins, it binds directly to 16S rRNA where it nucleates assembly of the head domain of the 30S subunit. Is located at the subunit interface close to the decoding center, probably blocks exit of the E-site tRNA. The protein is Small ribosomal subunit protein uS7 of Pseudomonas aeruginosa (strain LESB58).